Reading from the N-terminus, the 1939-residue chain is Myosin-4 (1939 aa).

The region spanning 33–82 (DAKSSVFVVDAKESYVKATVQSREGGKVTAKTEGGATVTVKDDQVFSMNP) is the Myosin N-terminal SH3-like domain. S36 is subject to Phosphoserine. Residues T64 and T69 each carry the phosphothreonine modification. S79 is subject to Phosphoserine. In terms of domain architecture, Myosin motor spans 86 to 782 (DKIEDMAMMT…LLGTLEEMRD (697 aa)). K130 is subject to N6,N6,N6-trimethyllysine. Residue 179–186 (GESGAGKT) participates in ATP binding. Phosphotyrosine is present on Y389. Residue T391 is modified to Phosphothreonine. A Phosphoserine modification is found at S392. T419 carries the phosphothreonine modification. Y424 carries the phosphotyrosine modification. Residue S625 is modified to Phosphoserine. Residues 659–681 (LNKLMTNLKSTHPHFVRCLIPNE) form an actin-binding region. H757 carries the post-translational modification Pros-methylhistidine. The tract at residues 761–775 (KFGHTKVFFKAGLLG) is actin-binding. Residue T776 is modified to Phosphothreonine. The IQ domain occupies 785–814 (LAQLITRTQAVCRGYLMRVEFKKMMERRES). Positions 843–1939 (LLKSAETEKE…EVHTKVISEE (1097 aa)) form a coiled coil. 2 positions are modified to phosphoserine: S1092 and S1096. Disordered regions lie at residues 1128-1147 (AERA…SREL) and 1153-1172 (RLEE…KKRE). Phosphoserine occurs at positions 1162 and 1237. The residue at position 1241 (T1241) is a Phosphothreonine. S1243 is subject to Phosphoserine. T1255 is modified (phosphothreonine). S1261 bears the Phosphoserine mark. Position 1265 is a phosphothreonine (T1265). Positions 1276–1299 (ELSTQKARLHTESGEFSRQLDEKD) are disordered. At S1278 the chain carries Phosphoserine. Residues 1284-1299 (LHTESGEFSRQLDEKD) show a composition bias toward basic and acidic residues. Position 1286 is a phosphothreonine (T1286). Phosphoserine is present on residues S1288, S1292, S1303, S1306, and S1413. Y1464 is modified (phosphotyrosine). The residue at position 1467 (T1467) is a Phosphothreonine. S1474 is modified (phosphoserine). Y1492 carries the post-translational modification Phosphotyrosine. Phosphoserine is present on S1495. Phosphothreonine is present on T1501. S1514 bears the Phosphoserine mark. The residue at position 1517 (T1517) is a Phosphothreonine. 8 positions are modified to phosphoserine: S1542, S1547, S1554, S1574, S1600, S1603, S1714, and S1726. 2 positions are modified to phosphothreonine: T1730 and T1736. S1739 is modified (phosphoserine).

It belongs to the TRAFAC class myosin-kinesin ATPase superfamily. Myosin family. As to quaternary structure, muscle myosin is a hexameric protein that consists of 2 heavy chain subunits (MHC), 2 alkali light chain subunits (MLC) and 2 regulatory light chain subunits (MLC-2). In terms of tissue distribution, expressed in type 2b myofibers in the tibialis anterior muscle (at protein level).

Its subcellular location is the cytoplasm. The protein localises to the myofibril. Functionally, muscle contraction. This Mus musculus (Mouse) protein is Myosin-4 (Myh4).